Consider the following 135-residue polypeptide: UPF0738 protein Aflv_2116 (135 aa).

It belongs to the UPF0738 family.

The sequence is that of UPF0738 protein Aflv_2116 from Anoxybacillus flavithermus (strain DSM 21510 / WK1).